The chain runs to 253 residues: Triosephosphate isomerase (253 aa).

N9 to K11 serves as a coordination point for substrate. Residue H98 is the Electrophile of the active site. E170 acts as the Proton acceptor in catalysis. Residues G176, S216, and G237 to G238 each bind substrate.

Belongs to the triosephosphate isomerase family. As to quaternary structure, homodimer.

The protein resides in the cytoplasm. It catalyses the reaction D-glyceraldehyde 3-phosphate = dihydroxyacetone phosphate. Its pathway is carbohydrate biosynthesis; gluconeogenesis. It functions in the pathway carbohydrate degradation; glycolysis; D-glyceraldehyde 3-phosphate from glycerone phosphate: step 1/1. Its function is as follows. Involved in the gluconeogenesis. Catalyzes stereospecifically the conversion of dihydroxyacetone phosphate (DHAP) to D-glyceraldehyde-3-phosphate (G3P). This chain is Triosephosphate isomerase, found in Amoebophilus asiaticus (strain 5a2).